The primary structure comprises 465 residues: ATP synthase subunit beta (465 aa).

Residue 152–159 (GGAGVGKT) participates in ATP binding.

This sequence belongs to the ATPase alpha/beta chains family. As to quaternary structure, F-type ATPases have 2 components, CF(1) - the catalytic core - and CF(0) - the membrane proton channel. CF(1) has five subunits: alpha(3), beta(3), gamma(1), delta(1), epsilon(1). CF(0) has three main subunits: a(1), b(2) and c(9-12). The alpha and beta chains form an alternating ring which encloses part of the gamma chain. CF(1) is attached to CF(0) by a central stalk formed by the gamma and epsilon chains, while a peripheral stalk is formed by the delta and b chains.

The protein localises to the cell inner membrane. It catalyses the reaction ATP + H2O + 4 H(+)(in) = ADP + phosphate + 5 H(+)(out). Produces ATP from ADP in the presence of a proton gradient across the membrane. The catalytic sites are hosted primarily by the beta subunits. The chain is ATP synthase subunit beta from Campylobacter concisus (strain 13826).